Reading from the N-terminus, the 367-residue chain is Inositol-3-phosphate synthase (367 aa).

An N-acetylserine modification is found at serine 2. Lysine 73 participates in a covalent cross-link: Isoglutamyl lysine isopeptide (Lys-Gln) (interchain with Q-Cter in protein Pup). 6 residues coordinate NAD(+): aspartate 78, alanine 137, tyrosine 157, serine 200, aspartate 235, and lysine 248.

The protein belongs to the myo-inositol 1-phosphate synthase family. The cofactor is NAD(+). Post-translationally, pupylated at Lys-73 by the prokaryotic ubiquitin-like protein Pup, which leads to its degradation by the proteasome.

It carries out the reaction D-glucose 6-phosphate = 1D-myo-inositol 3-phosphate. In terms of biological role, key enzyme in myo-inositol biosynthesis pathway that catalyzes the conversion of glucose 6-phosphate to 1D-myo-inositol 3-phosphate in a NAD-dependent manner. The sequence is that of Inositol-3-phosphate synthase (ino1) from Mycobacterium tuberculosis (strain ATCC 25618 / H37Rv).